The following is a 261-amino-acid chain: Kallikrein 1-related peptidase b9 (261 aa).

Residues 1–18 form the signal peptide; the sequence is MRFLILFLALSLGGIDAA. A propeptide spans 19–24 (activation peptide); sequence PPVHSR. Residues 25 to 258 enclose the Peptidase S1 domain; sequence IVGGFKCEKN…FTSWIKDTMA (234 aa). Cystine bridges form between Cys-31/Cys-173, Cys-50/Cys-66, Cys-152/Cys-219, Cys-184/Cys-198, and Cys-209/Cys-234. Residue His-65 is the Charge relay system of the active site. An N-linked (GlcNAc...) asparagine glycan is attached at Asn-102. The active-site Charge relay system is Asp-120. Ser-213 functions as the Charge relay system in the catalytic mechanism.

The protein belongs to the peptidase S1 family. Kallikrein subfamily.

It catalyses the reaction Preferential cleavage of Arg-|-Xaa bonds in small molecule substrates. Highly selective action to release kallidin (lysyl-bradykinin) from kininogen involves hydrolysis of Met-|-Xaa or Leu-|-Xaa.. Glandular kallikreins cleave Met-Lys and Arg-Ser bonds in kininogen to release Lys-bradykinin. The chain is Kallikrein 1-related peptidase b9 (Klk1b9) from Mus musculus (Mouse).